A 103-amino-acid chain; its full sequence is Large ribosomal subunit protein bL21 (103 aa).

This sequence belongs to the bacterial ribosomal protein bL21 family. As to quaternary structure, part of the 50S ribosomal subunit. Contacts protein L20.

Functionally, this protein binds to 23S rRNA in the presence of protein L20. The polypeptide is Large ribosomal subunit protein bL21 (Erwinia tasmaniensis (strain DSM 17950 / CFBP 7177 / CIP 109463 / NCPPB 4357 / Et1/99)).